The primary structure comprises 437 residues: Replication factor C large subunit (437 aa).

48–55 (GPPGVGKT) is a binding site for ATP. The disordered stretch occupies residues 410–437 (TQASKPTSEEKAEKSKKYYPKRSSSRKT). A compositionally biased stretch (basic and acidic residues) spans 416–425 (TSEEKAEKSK). The segment covering 426-437 (KYYPKRSSSRKT) has biased composition (basic residues).

Belongs to the activator 1 small subunits family. RfcL subfamily. Heteromultimer composed of small subunits (RfcS) and large subunits (RfcL).

Functionally, part of the RFC clamp loader complex which loads the PCNA sliding clamp onto DNA. This is Replication factor C large subunit from Sulfolobus acidocaldarius (strain ATCC 33909 / DSM 639 / JCM 8929 / NBRC 15157 / NCIMB 11770).